Reading from the N-terminus, the 144-residue chain is Large ribosomal subunit protein uL16 (144 aa).

The protein belongs to the universal ribosomal protein uL16 family. As to quaternary structure, part of the 50S ribosomal subunit.

In terms of biological role, binds 23S rRNA and is also seen to make contacts with the A and possibly P site tRNAs. In Caldanaerobacter subterraneus subsp. tengcongensis (strain DSM 15242 / JCM 11007 / NBRC 100824 / MB4) (Thermoanaerobacter tengcongensis), this protein is Large ribosomal subunit protein uL16.